Consider the following 333-residue polypeptide: Tetraacyldisaccharide 4'-kinase (333 aa).

55-62 is an ATP binding site; sequence SVGGNGKT.

This sequence belongs to the LpxK family.

The enzyme catalyses a lipid A disaccharide + ATP = a lipid IVA + ADP + H(+). It participates in glycolipid biosynthesis; lipid IV(A) biosynthesis; lipid IV(A) from (3R)-3-hydroxytetradecanoyl-[acyl-carrier-protein] and UDP-N-acetyl-alpha-D-glucosamine: step 6/6. Functionally, transfers the gamma-phosphate of ATP to the 4'-position of a tetraacyldisaccharide 1-phosphate intermediate (termed DS-1-P) to form tetraacyldisaccharide 1,4'-bis-phosphate (lipid IVA). The chain is Tetraacyldisaccharide 4'-kinase from Aeromonas hydrophila subsp. hydrophila (strain ATCC 7966 / DSM 30187 / BCRC 13018 / CCUG 14551 / JCM 1027 / KCTC 2358 / NCIMB 9240 / NCTC 8049).